The sequence spans 213 residues: MRILITGFDPFGGERVNPALEAVKLLPDEIGAHKIDKLEIPTVFHKSKDVILSQMKRYEYDIVLAIGQAGGRYELTPERVGINVDDARIADNEGNQPIDEVIQVDGNAAYFSNLPVKRITEAIKAQGIPSRLSNTAGTFVCNHILYQLGYLQATAFPKIKFGFIHVPFVPEQVTDKPEKPSMSLETIRIGLYAALEAIVESGEDIKVALGETH.

Residues E78, C141, and H165 contribute to the active site.

It belongs to the peptidase C15 family. Homotetramer.

Its subcellular location is the cytoplasm. It carries out the reaction Release of an N-terminal pyroglutamyl group from a polypeptide, the second amino acid generally not being Pro.. Removes 5-oxoproline from various penultimate amino acid residues except L-proline. In Staphylococcus saprophyticus subsp. saprophyticus (strain ATCC 15305 / DSM 20229 / NCIMB 8711 / NCTC 7292 / S-41), this protein is Pyrrolidone-carboxylate peptidase.